The sequence spans 510 residues: ATP synthase subunit alpha (510 aa).

169–176 contacts ATP; sequence GDRQTGKT.

It belongs to the ATPase alpha/beta chains family. As to quaternary structure, F-type ATPases have 2 components, CF(1) - the catalytic core - and CF(0) - the membrane proton channel. CF(1) has five subunits: alpha(3), beta(3), gamma(1), delta(1), epsilon(1). CF(0) has three main subunits: a(1), b(2) and c(9-12). The alpha and beta chains form an alternating ring which encloses part of the gamma chain. CF(1) is attached to CF(0) by a central stalk formed by the gamma and epsilon chains, while a peripheral stalk is formed by the delta and b chains.

Its subcellular location is the cell inner membrane. The catalysed reaction is ATP + H2O + 4 H(+)(in) = ADP + phosphate + 5 H(+)(out). Its function is as follows. Produces ATP from ADP in the presence of a proton gradient across the membrane. The alpha chain is a regulatory subunit. The chain is ATP synthase subunit alpha from Rickettsia massiliae (strain Mtu5).